A 157-amino-acid chain; its full sequence is Large ribosomal subunit protein uL22 (157 aa).

The protein belongs to the universal ribosomal protein uL22 family. Part of the 50S ribosomal subunit.

In terms of biological role, this protein binds specifically to 23S rRNA. It makes multiple contacts with different domains of the 23S rRNA in the assembled 50S subunit and ribosome. Its function is as follows. The globular domain of the protein is located near the polypeptide exit tunnel on the outside of the subunit, while an extended beta-hairpin is found that lines the wall of the exit tunnel in the center of the 70S ribosome. In Staphylothermus marinus (strain ATCC 43588 / DSM 3639 / JCM 9404 / F1), this protein is Large ribosomal subunit protein uL22.